Here is a 544-residue protein sequence, read N- to C-terminus: Ribosomal protein S6 kinase-like 1 (544 aa).

The region spanning 87 to 115 (VHVDPNKERREAVKLKITKYLRRAEEIFN) is the MIT domain. Positions 145–534 (SALEQLKGCR…TSRLKSHPFF (390 aa)) constitute a Protein kinase domain. Residues 151–159 (KGCRVVGII) and lysine 177 contribute to the ATP site. 2 disordered regions span residues 262–344 (PAEL…HWVR) and 353–372 (AYGR…SLGS). Residues 303 to 313 (SRPSAVFSSDP) show a composition bias toward polar residues. Aspartate 407 functions as the Proton acceptor in the catalytic mechanism.

It belongs to the protein kinase superfamily. Ser/Thr protein kinase family. S6 kinase subfamily.

The enzyme catalyses L-seryl-[protein] + ATP = O-phospho-L-seryl-[protein] + ADP + H(+). It catalyses the reaction L-threonyl-[protein] + ATP = O-phospho-L-threonyl-[protein] + ADP + H(+). This is Ribosomal protein S6 kinase-like 1 (Rps6kl1) from Mus musculus (Mouse).